Reading from the N-terminus, the 250-residue chain is Mediator of RNA polymerase II transcription subunit 8 (250 aa).

A disordered region spans residues 217–250; it reads SPMSAVSPGAGPLGKMPSGIKTNIKSANQVHPYR. Positions 236 to 250 are enriched in polar residues; sequence IKTNIKSANQVHPYR.

It belongs to the Mediator complex subunit 8 family. Component of the Mediator complex.

The protein resides in the nucleus. Its function is as follows. Component of the Mediator complex, a coactivator involved in the regulated transcription of nearly all RNA polymerase II-dependent genes. Mediator functions as a bridge to convey information from gene-specific regulatory proteins to the basal RNA polymerase II transcription machinery. Mediator is recruited to promoters by direct interactions with regulatory proteins and serves as a scaffold for the assembly of a functional preinitiation complex with RNA polymerase II and the general transcription factors. This Aedes aegypti (Yellowfever mosquito) protein is Mediator of RNA polymerase II transcription subunit 8 (MED8).